A 194-amino-acid polypeptide reads, in one-letter code: MRQSSQARETTETKIKLNLQLDESTNVSIQTGVGFFDHMLTLFARHGRFGLQVEAEGDVFVDAHHTVEDVGIVLGNCLKEALQNKEGINRYGSAYVPMDESLGFVAIDISGRSYCVFQGELTNPKLGDFDTELTEEFFRAVAHAANITLHARVLYGSNTHHKIEALFKAFGRALREAVEKNANITGVNSTKGML.

The protein belongs to the imidazoleglycerol-phosphate dehydratase family.

Its subcellular location is the cytoplasm. It catalyses the reaction D-erythro-1-(imidazol-4-yl)glycerol 3-phosphate = 3-(imidazol-4-yl)-2-oxopropyl phosphate + H2O. It participates in amino-acid biosynthesis; L-histidine biosynthesis; L-histidine from 5-phospho-alpha-D-ribose 1-diphosphate: step 6/9. The polypeptide is Imidazoleglycerol-phosphate dehydratase (Bacillus cereus (strain ATCC 14579 / DSM 31 / CCUG 7414 / JCM 2152 / NBRC 15305 / NCIMB 9373 / NCTC 2599 / NRRL B-3711)).